Reading from the N-terminus, the 394-residue chain is MARDYYEILGVSRDSSKEEIKRAYRRLARKYHPDVNKEPGAEERFKEINRAYEVLSDNELKARYDRFGEAGLSGAAAAASGFQDFAGMGGFADIFESFFTNFAGAGASYARSRQGPVRGDDLRFDLKLEFLEAIFGGEKQIRISHLEVCNVCGGSGAKPGTEVKTCPTCGGSGQVRRATRTPFGNFTQVSVCPTCGGSGQVLEEPCYNCNGEGLAQTTKKLRINIPAGVDSGTRLRVSGEGDAGRRGGPPGDLYVYLFVEPDPDFQRDGLTILSEVRVSYLQAILGAKVSVPTVDSKAGLEEEVELTIPAGSQPGTVLTLEGKGVPRIGNPMSRGDHQITLVVEIPTRISSEERELLMRLAELHGERINKRDGFLGGLLRGLAQMPGNREREEE.

The region spanning 4–68 is the J domain; sequence DYYEILGVSR…ELKARYDRFG (65 aa). The CR-type zinc finger occupies 136–218; the sequence is GGEKQIRISH…CNGEGLAQTT (83 aa). 8 residues coordinate Zn(2+): Cys149, Cys152, Cys166, Cys169, Cys192, Cys195, Cys206, and Cys209. 4 CXXCXGXG motif repeats span residues 149–156, 166–173, 192–199, and 206–213; these read CNVCGGSG, CPTCGGSG, and CYNCNGEG.

It belongs to the DnaJ family. Homodimer. The cofactor is Zn(2+).

It localises to the cytoplasm. In terms of biological role, participates actively in the response to hyperosmotic and heat shock by preventing the aggregation of stress-denatured proteins and by disaggregating proteins, also in an autonomous, DnaK-independent fashion. Unfolded proteins bind initially to DnaJ; upon interaction with the DnaJ-bound protein, DnaK hydrolyzes its bound ATP, resulting in the formation of a stable complex. GrpE releases ADP from DnaK; ATP binding to DnaK triggers the release of the substrate protein, thus completing the reaction cycle. Several rounds of ATP-dependent interactions between DnaJ, DnaK and GrpE are required for fully efficient folding. Also involved, together with DnaK and GrpE, in the DNA replication of plasmids through activation of initiation proteins. The polypeptide is Chaperone protein DnaJ (Synechococcus sp. (strain JA-2-3B'a(2-13)) (Cyanobacteria bacterium Yellowstone B-Prime)).